The sequence spans 181 residues: Reverse rubrerythrin-1 (181 aa).

Residues 1 to 35 enclose the Rubredoxin-like domain; it reads MKKFKCVVCGYIYTGEDAPEKCPVCGAGKDKFVEV. The Fe cation site is built by Cys6, Cys9, Cys22, Cys25, Glu69, Glu102, Glu132, Glu165, and His168. In terms of domain architecture, Ferritin-like diiron spans 52–181; sequence KGVDKEVLEG…FRGLLNRYFK (130 aa).

Homodimer. Fe(3+) is required as a cofactor.

It catalyses the reaction H2O2 + NADH + H(+) = NAD(+) + 2 H2O. Functionally, functions as the terminal component of an NADH peroxidase (NADH:H(2)O(2) oxidoreductase) when using NADH:rubredoxin oxidoreductase (NROR) and rubredoxin (Rd) as electron transport intermediaries from NADH to revRbr 1. Plays an important role in the oxidative stress defense system in C.acetobutylicum, an obligate anaerobic bacterium. Also exhibits NADH oxidase (NADH:O(2) oxidoreductase) activity in vitro, which is 100-fold lesser than that of FprA1/2 using the same electron transfer components. Therefore, its predominant function is most likely as a scavenger of its preferred substrate, H(2)O(2). In Clostridium acetobutylicum (strain ATCC 824 / DSM 792 / JCM 1419 / IAM 19013 / LMG 5710 / NBRC 13948 / NRRL B-527 / VKM B-1787 / 2291 / W), this protein is Reverse rubrerythrin-1 (rbr3A).